The following is a 360-amino-acid chain: Serine/threonine transporter SstT (360 aa).

9 helical membrane passes run 17-37 (IGIGVVLGVLLGLIAPKITVI), 40-60 (FGSLFVGALKAIAPLLVLTLV), 78-98 (VICLYLFGTFAAAFIAVGASY), 138-158 (ALATANYIGVLTWAAVFGLAF), 179-199 (VVGWIIGLAPFGIMGLVFDTI), 212-232 (LLLLLLVGSMIFVALVVNPLI), 295-315 (MAGAAITINILTMAAVHTLGI), 316-336 (SVDFSSALLLSVVASLSAAGA), and 339-359 (VAGGSLLLIPVACSLFVVPYV).

Belongs to the dicarboxylate/amino acid:cation symporter (DAACS) (TC 2.A.23) family.

It is found in the cell membrane. The enzyme catalyses L-serine(in) + Na(+)(in) = L-serine(out) + Na(+)(out). It carries out the reaction L-threonine(in) + Na(+)(in) = L-threonine(out) + Na(+)(out). Its function is as follows. Involved in the import of serine and threonine into the cell, with the concomitant import of sodium (symport system). The polypeptide is Serine/threonine transporter SstT (Streptococcus suis (strain 05ZYH33)).